The following is a 172-amino-acid chain: Phosphatidylglycerophosphatase A (172 aa).

Topologically, residues 1 to 31 are cytoplasmic; that stretch reads MTILPRHKDVAKSRLKMSNPWHLLAVGFGSG. A helical membrane pass occupies residues 32–52; the sequence is LSPIVPGTMGSLAAIPFWYLM. A topological domain (periplasmic) is located at residue T53. A helical membrane pass occupies residues 54-74; that stretch reads FLPWQLYSLVVMLGICIGVYL. At 75 to 141 the chain is on the cytoplasmic side; it reads CHQTAKDMGV…RWFDRNVHGG (67 aa). Residues 142–162 form a helical membrane-spanning segment; it reads MGIMIDDIVAGVISAGILYFI. Topologically, residues 163–172 are periplasmic; the sequence is GHHWPLGILS.

Requires Mg(2+) as cofactor.

The protein resides in the cell inner membrane. The catalysed reaction is a 1,2-diacyl-sn-glycero-3-phospho-(1'-sn-glycero-3'-phosphate) + H2O = a 1,2-diacyl-sn-glycero-3-phospho-(1'-sn-glycerol) + phosphate. The protein operates within phospholipid metabolism; phosphatidylglycerol biosynthesis; phosphatidylglycerol from CDP-diacylglycerol: step 2/2. In terms of biological role, lipid phosphatase which dephosphorylates phosphatidylglycerophosphate (PGP) to phosphatidylglycerol (PG). This chain is Phosphatidylglycerophosphatase A (pgpA), found in Escherichia coli (strain K12).